The sequence spans 805 residues: Phenylalanine--tRNA ligase beta subunit (805 aa).

The tRNA-binding domain occupies 39–148 (APPFTGVVVA…AALRPGTDIR (110 aa)). The B5 domain occupies 399–474 (PVREPVRMRL…RVYGFERIPD (76 aa)). 4 residues coordinate Mg(2+): Asp-452, Asp-458, Glu-461, and Glu-462. The region spanning 703–804 (SRQPAVVRDL…LVAAHNARQR (102 aa)) is the FDX-ACB domain.

Belongs to the phenylalanyl-tRNA synthetase beta subunit family. Type 1 subfamily. Tetramer of two alpha and two beta subunits. It depends on Mg(2+) as a cofactor.

It localises to the cytoplasm. The catalysed reaction is tRNA(Phe) + L-phenylalanine + ATP = L-phenylalanyl-tRNA(Phe) + AMP + diphosphate + H(+). The protein is Phenylalanine--tRNA ligase beta subunit of Bordetella parapertussis (strain 12822 / ATCC BAA-587 / NCTC 13253).